The sequence spans 348 residues: Serine/threonine-protein kinase SBK2 (348 aa).

Positions 1–25 (MPGKQSEEGPAEAGASEDSEEEGLG) are disordered. The 269-residue stretch at 62–330 (YEEVRPLGQG…IREHLGRPWR (269 aa)) folds into the Protein kinase domain. ATP contacts are provided by residues 68-76 (LGQGCYGRV) and lysine 91. The active-site Proton acceptor is aspartate 183.

The protein belongs to the protein kinase superfamily. Ser/Thr protein kinase family. STKL subfamily.

It carries out the reaction L-seryl-[protein] + ATP = O-phospho-L-seryl-[protein] + ADP + H(+). The catalysed reaction is L-threonyl-[protein] + ATP = O-phospho-L-threonyl-[protein] + ADP + H(+). The chain is Serine/threonine-protein kinase SBK2 (SBK2) from Homo sapiens (Human).